A 272-amino-acid chain; its full sequence is Small ribosomal subunit protein mS23 (272 aa).

A disordered region spans residues 233–272 (KENASKAAGDASAVSSEKQVEDDVVNFDESTDADQEVLHF). The span at 252 to 272 (VEDDVVNFDESTDADQEVLHF) shows a compositional bias: acidic residues.

Belongs to the mitochondrion-specific ribosomal protein mS23 family. In terms of assembly, component of the mitochondrial small ribosomal subunit.

The protein resides in the mitochondrion. The sequence is that of Small ribosomal subunit protein mS23 (RSM25) from Candida glabrata (strain ATCC 2001 / BCRC 20586 / JCM 3761 / NBRC 0622 / NRRL Y-65 / CBS 138) (Yeast).